We begin with the raw amino-acid sequence, 327 residues long: Fructose-1,6-bisphosphatase class 1 (327 aa).

Mg(2+) is bound by residues E84, D103, L105, and D106. Residues 106 to 109, N197, and K263 contribute to the substrate site; that span reads DGSS. E269 serves as a coordination point for Mg(2+).

The protein belongs to the FBPase class 1 family. In terms of assembly, homotetramer. Mg(2+) serves as cofactor.

Its subcellular location is the cytoplasm. It carries out the reaction beta-D-fructose 1,6-bisphosphate + H2O = beta-D-fructose 6-phosphate + phosphate. Its pathway is carbohydrate biosynthesis; gluconeogenesis. The sequence is that of Fructose-1,6-bisphosphatase class 1 from Idiomarina loihiensis (strain ATCC BAA-735 / DSM 15497 / L2-TR).